The primary structure comprises 98 residues: uncharacterized protein (98 aa).

Residues 1-85 (MLETVPVRCV…GTLKQALENM (85 aa)) enclose the STAS domain.

Post-translationally, phosphorylated on threonine residue(s). Phosphorylated by PrkC and dephosphorylated by PrpC.

It localises to the cytoplasm. This is an uncharacterized protein from Bacillus subtilis (strain 168).